A 62-amino-acid polypeptide reads, in one-letter code: MLFIFQLTLLAFIGLSLALVIGVPVLLASPEGWAQSKGLVFSGSALWMLLVFVVGALNSFVS.

A run of 2 helical transmembrane segments spans residues Thr-8–Ala-28 and Phe-41–Val-61.

It belongs to the PsbZ family. PSII is composed of 1 copy each of membrane proteins PsbA, PsbB, PsbC, PsbD, PsbE, PsbF, PsbH, PsbI, PsbJ, PsbK, PsbL, PsbM, PsbT, PsbY, PsbZ, Psb30/Ycf12, at least 3 peripheral proteins of the oxygen-evolving complex and a large number of cofactors. It forms dimeric complexes.

It is found in the plastid. The protein resides in the chloroplast thylakoid membrane. In terms of biological role, may control the interaction of photosystem II (PSII) cores with the light-harvesting antenna, regulates electron flow through the 2 photosystem reaction centers. PSII is a light-driven water plastoquinone oxidoreductase, using light energy to abstract electrons from H(2)O, generating a proton gradient subsequently used for ATP formation. The polypeptide is Photosystem II reaction center protein Z (Ostreococcus tauri).